Consider the following 114-residue polypeptide: Vacuolar morphogenesis protein 10 (114 aa).

Its subcellular location is the vacuole membrane. Functionally, required for vacuolar fusion. Involved in the early steps of the fusion pathway. This chain is Vacuolar morphogenesis protein 10 (VAM10), found in Saccharomyces cerevisiae (strain ATCC 204508 / S288c) (Baker's yeast).